We begin with the raw amino-acid sequence, 428 residues long: Serine--tRNA ligase (428 aa).

235-237 (TAE) is a binding site for L-serine. ATP is bound at residue 266-268 (RSE). Residue Glu289 coordinates L-serine. 353–356 (EISS) provides a ligand contact to ATP. Ser389 is an L-serine binding site.

Belongs to the class-II aminoacyl-tRNA synthetase family. Type-1 seryl-tRNA synthetase subfamily. In terms of assembly, homodimer. The tRNA molecule binds across the dimer.

The protein resides in the cytoplasm. The enzyme catalyses tRNA(Ser) + L-serine + ATP = L-seryl-tRNA(Ser) + AMP + diphosphate + H(+). It carries out the reaction tRNA(Sec) + L-serine + ATP = L-seryl-tRNA(Sec) + AMP + diphosphate + H(+). Its pathway is aminoacyl-tRNA biosynthesis; selenocysteinyl-tRNA(Sec) biosynthesis; L-seryl-tRNA(Sec) from L-serine and tRNA(Sec): step 1/1. Catalyzes the attachment of serine to tRNA(Ser). Is also able to aminoacylate tRNA(Sec) with serine, to form the misacylated tRNA L-seryl-tRNA(Sec), which will be further converted into selenocysteinyl-tRNA(Sec). This chain is Serine--tRNA ligase, found in Shewanella halifaxensis (strain HAW-EB4).